The primary structure comprises 201 residues: Dephospho-CoA kinase (201 aa).

Residues Val-6–Gly-201 form the DPCK domain. Residue Gly-14–Ala-19 coordinates ATP.

Belongs to the CoaE family.

It is found in the cytoplasm. The catalysed reaction is 3'-dephospho-CoA + ATP = ADP + CoA + H(+). It functions in the pathway cofactor biosynthesis; coenzyme A biosynthesis; CoA from (R)-pantothenate: step 5/5. Its function is as follows. Catalyzes the phosphorylation of the 3'-hydroxyl group of dephosphocoenzyme A to form coenzyme A. The sequence is that of Dephospho-CoA kinase from Novosphingobium aromaticivorans (strain ATCC 700278 / DSM 12444 / CCUG 56034 / CIP 105152 / NBRC 16084 / F199).